The sequence spans 66 residues: Large ribosomal subunit protein bL31 (66 aa).

Residues cysteine 16, cysteine 18, cysteine 36, and cysteine 39 each contribute to the Zn(2+) site.

This sequence belongs to the bacterial ribosomal protein bL31 family. Type A subfamily. In terms of assembly, part of the 50S ribosomal subunit. Zn(2+) serves as cofactor.

In terms of biological role, binds the 23S rRNA. This is Large ribosomal subunit protein bL31 from Geobacillus kaustophilus (strain HTA426).